We begin with the raw amino-acid sequence, 333 residues long: DNA-directed RNA polymerase subunit alpha (333 aa).

Residues 1-234 (MQISVNEFLT…QQLAAFVDLK (234 aa)) form an alpha N-terminal domain (alpha-NTD) region. The interval 248–333 (IDPILLRPVD…SLKKDDKATA (86 aa)) is alpha C-terminal domain (alpha-CTD).

Belongs to the RNA polymerase alpha chain family. As to quaternary structure, homodimer. The RNAP catalytic core consists of 2 alpha, 1 beta, 1 beta' and 1 omega subunit. When a sigma factor is associated with the core the holoenzyme is formed, which can initiate transcription.

The catalysed reaction is RNA(n) + a ribonucleoside 5'-triphosphate = RNA(n+1) + diphosphate. Its function is as follows. DNA-dependent RNA polymerase catalyzes the transcription of DNA into RNA using the four ribonucleoside triphosphates as substrates. The sequence is that of DNA-directed RNA polymerase subunit alpha from Pseudomonas entomophila (strain L48).